The sequence spans 141 residues: Hemoglobin subunit alpha (141 aa).

The Globin domain occupies 1-141 (VLSPADKTNV…VSTVLTSKYR (141 aa)). At Ser-3 the chain carries Phosphoserine. Residue Lys-7 is modified to N6-succinyllysine. Thr-8 is subject to Phosphothreonine. At Lys-11 the chain carries N6-succinyllysine. Lys-16 is subject to N6-acetyllysine; alternate. Lys-16 is modified (N6-succinyllysine; alternate). Residue Tyr-24 is modified to Phosphotyrosine. Residue Ser-35 is modified to Phosphoserine. Lys-40 is subject to N6-succinyllysine. Ser-49 carries the phosphoserine modification. His-58 serves as a coordination point for O2. His-87 contributes to the heme b binding site. Phosphoserine is present on Ser-102. Thr-108 is subject to Phosphothreonine. Ser-124 is modified (phosphoserine). 2 positions are modified to phosphothreonine: Thr-134 and Thr-137. Ser-138 carries the phosphoserine modification.

Belongs to the globin family. In terms of assembly, heterotetramer of two alpha chains and two beta chains. As to expression, red blood cells.

Its function is as follows. Involved in oxygen transport from the lung to the various peripheral tissues. Hemopressin acts as an antagonist peptide of the cannabinoid receptor CNR1. Hemopressin-binding efficiently blocks cannabinoid receptor CNR1 and subsequent signaling. The sequence is that of Hemoglobin subunit alpha (HBA) from Martes foina (Beech marten).